The sequence spans 227 residues: Ubiquitin domain-containing protein 1 (227 aa).

The tract at residues 1–35 (MGNCVGRQRRERPAAPGHPRKRAGRNEPLKKERLK) is disordered. Over residues 24–35 (GRNEPLKKERLK) the composition is skewed to basic and acidic residues. The region spanning 149 to 224 (FPLKVRLSTG…IQVIINQPPP (76 aa)) is the Ubiquitin-like domain.

Interacts with UBTD1.

Functionally, may be involved in the regulation of cellular senescence through a positive feedback loop with TP53. Is a TP53 downstream target gene that increases the stability of TP53 protein by promoting the ubiquitination and degradation of MDM2. This is Ubiquitin domain-containing protein 1 (Ubtd1) from Rattus norvegicus (Rat).